Consider the following 920-residue polypeptide: Ubiquitin ligase-binding protein BUL2 (920 aa).

Residues 1–10 are compositionally biased toward polar residues; it reads MTFTFSTSSR. A disordered region spans residues 1–89; it reads MTFTFSTSSR…EENSLEMDCT (89 aa). T22 is subject to Phosphothreonine. Residues 35–57 show a composition bias toward polar residues; it reads QQLSSNSTDNSLHPNSGQTPRAS. A compositionally biased stretch (basic and acidic residues) spans 73–82; that stretch reads DRLRQEREEN. Residues 129 to 133 carry the PY-motif motif; the sequence is FPPSY. Position 557 is a phosphoserine (S557).

The protein belongs to the BUL1 family. As to quaternary structure, component of the RSP5-BUL1/2 ubiquitin ligase complex composed of at least RSP5 and BUL1 or BUL2.

Its subcellular location is the cytoplasm. Its pathway is protein modification; protein ubiquitination. Component of a RSP5 ubiquitin ligase complex which specifies polyubiquitination and intracellular trafficking of the general amino acid permease GAP1 as well as other permeases such as PMA1. The RSP5-BUL1/2 complex is also necessary for the heat-shock element (HSE)-mediated gene expression, nitrogen starvation GLN3-dependent transcription and pressure-induced differential regulation of the 2 tryptophan permeases TAT1 and TAT2. The sequence is that of Ubiquitin ligase-binding protein BUL2 (BUL2) from Saccharomyces cerevisiae (strain ATCC 204508 / S288c) (Baker's yeast).